Here is a 171-residue protein sequence, read N- to C-terminus: S-ribosylhomocysteine lyase (171 aa).

Fe cation-binding residues include histidine 54, histidine 58, and cysteine 128.

Belongs to the LuxS family. Homodimer. Fe cation is required as a cofactor.

The enzyme catalyses S-(5-deoxy-D-ribos-5-yl)-L-homocysteine = (S)-4,5-dihydroxypentane-2,3-dione + L-homocysteine. In terms of biological role, involved in the synthesis of autoinducer 2 (AI-2) which is secreted by bacteria and is used to communicate both the cell density and the metabolic potential of the environment. The regulation of gene expression in response to changes in cell density is called quorum sensing. Catalyzes the transformation of S-ribosylhomocysteine (RHC) to homocysteine (HC) and 4,5-dihydroxy-2,3-pentadione (DPD). The chain is S-ribosylhomocysteine lyase from Pectobacterium atrosepticum (strain SCRI 1043 / ATCC BAA-672) (Erwinia carotovora subsp. atroseptica).